A 914-amino-acid polypeptide reads, in one-letter code: Protein GAMETE EXPRESSED 2 (914 aa).

Filamin repeat units follow at residues 249–382 (IGYC…IKEV) and 391–485 (ACSV…DVNV). Residues 893 to 913 (LVVVPFSFFSIKLFSLLMVLI) traverse the membrane as a helical segment.

As to expression, in tricellular pollen, expressed in mature sperm cells but not in the vegetative cell. In bicellular pollen, detected in the progenitor generative cell. Detected in the egg cell within the female gametophyte.

The protein localises to the cell membrane. This Arabidopsis thaliana (Mouse-ear cress) protein is Protein GAMETE EXPRESSED 2 (GEX2).